We begin with the raw amino-acid sequence, 295 residues long: Probable ketoamine kinase slr1563 (295 aa).

Residue 99–101 coordinates ATP; it reads EWL. Asp-201 serves as the catalytic Proton acceptor.

The protein belongs to the fructosamine kinase family.

Ketoamine kinase that phosphorylates ketoamines on the third carbon of the sugar moiety to generate ketoamine 3-phosphate. The polypeptide is Probable ketoamine kinase slr1563 (Synechocystis sp. (strain ATCC 27184 / PCC 6803 / Kazusa)).